The following is a 140-amino-acid chain: Putative pre-16S rRNA nuclease (140 aa).

This sequence belongs to the YqgF nuclease family.

It is found in the cytoplasm. In terms of biological role, could be a nuclease involved in processing of the 5'-end of pre-16S rRNA. This Aeromonas salmonicida (strain A449) protein is Putative pre-16S rRNA nuclease.